Here is a 483-residue protein sequence, read N- to C-terminus: ATP-dependent RNA helicase DDX25 (483 aa).

Thr-49 bears the Phosphothreonine mark. Residues 61 to 74 (LAANSLLNKLIRQS) carry the Nuclear export signal motif. The short motif at 97–125 (KTFEELRLKEELLKGIYAMGFNRPSKIQE) is the Q motif element. The Nuclear localization signal signature appears at 100-114 (EELRLKEELLKGIYA). Residues 130–300 (MMLAHPPQNL…ERIIPDPNVI (171 aa)) enclose the Helicase ATP-binding domain. An ATP-binding site is contributed by 143–150 (SQSGTGKT). The DEAD box motif lies at 247-250 (DEAD). The Helicase C-terminal domain maps to 311–478 (NIRQYYVLCE…QLDPEDMDEI (168 aa)).

It belongs to the DEAD box helicase family. Phosphorylated on threonine residues. The phosphorylated form is found in the cytoplasm but not in the nucleus. In terms of tissue distribution, isoform 1 is expressed in germ cells. Isoform 2 is highly expressed in Leydig cells and weakly expressed in the pituitary and hypothalamus. Isoform 3 is weakly expressed only in germ cells.

The protein resides in the cytoplasm. It localises to the nucleus. The catalysed reaction is ATP + H2O = ADP + phosphate + H(+). In terms of biological role, ATP-dependent RNA helicase. Required for mRNA export and translation regulation during spermatid development. In Rattus norvegicus (Rat), this protein is ATP-dependent RNA helicase DDX25 (Ddx25).